Here is a 954-residue protein sequence, read N- to C-terminus: Valine--tRNA ligase (954 aa).

The short motif at 48-58 is the 'HIGH' region element; that stretch reads PNVTGSLHMGH. A 'KMSKS' region motif is present at residues 560 to 564; that stretch reads KMSKS. K563 is a binding site for ATP. The stretch at 883-954 forms a coiled coil; it reads AGFINKEAEL…QTQYQAIENL (72 aa).

The protein belongs to the class-I aminoacyl-tRNA synthetase family. ValS type 1 subfamily. As to quaternary structure, monomer.

The protein resides in the cytoplasm. It carries out the reaction tRNA(Val) + L-valine + ATP = L-valyl-tRNA(Val) + AMP + diphosphate. Catalyzes the attachment of valine to tRNA(Val). As ValRS can inadvertently accommodate and process structurally similar amino acids such as threonine, to avoid such errors, it has a 'posttransfer' editing activity that hydrolyzes mischarged Thr-tRNA(Val) in a tRNA-dependent manner. The chain is Valine--tRNA ligase from Actinobacillus pleuropneumoniae serotype 3 (strain JL03).